The following is a 562-amino-acid chain: uncharacterized protein (562 aa).

5 helical membrane passes run 15-34 (WGGGVAHSVLILSLVIAFGI), 41-63 (VAGISLGVTWILFVGIVFGHFNL), 78-97 (LILFVYSIGLQVGPGFFSAF), 104-126 (LNMLAMIVVFAGVIITLALHFIT), and 165-187 (IALGYAVAYPLGVVGCIMSLLGL). 2 consecutive RCK C-terminal domains span residues 204-286 (QGLG…ITAF) and 289-374 (KPIE…VLGN). 6 helical membrane-spanning segments follow: residues 384–403 (LIPIFLGIALGCILGSIPFM), 413–430 (LGLAGGPLIVSILISRFG), 450–472 (IGISLFLACVGLGAGDGFVETII), 476–498 (GYVWIAYGMIITIVPLLLAGFIG), 505–524 (NYYTLIGVLAGSTTNPPALA), and 539–561 (YATVYPLTMFLRVLTAQLLILSL).

It belongs to the AAE transporter (TC 2.A.81) family.

The protein resides in the cell membrane. This is an uncharacterized protein from Bacteroides fragilis (strain YCH46).